Reading from the N-terminus, the 1269-residue chain is Clustered mitochondria protein homolog (1269 aa).

In terms of domain architecture, Clu spans 297-552 (PSNNGDFMRT…NTNPVDIEFV (256 aa)). Over residues 958–969 (EKKKEESKKAAA) the composition is skewed to basic and acidic residues. The tract at residues 958–989 (EKKKEESKKAAADGEDAGSSGATSKEEEQAKE) is disordered. TPR repeat units follow at residues 1020 to 1053 (VSSY…SERC) and 1147 to 1180 (GQNE…FSKE). The interval 1211–1269 (LASAQQATKPANISQKKGKKSSSSSPALTNKSVDELLQFIEGPGASKSSKKSKKKHTKN) is disordered. Over residues 1213 to 1223 (SAQQATKPANI) the composition is skewed to polar residues. The span at 1258–1269 (SSKKSKKKHTKN) shows a compositional bias: basic residues.

This sequence belongs to the CLU family. In terms of assembly, may associate with the eukaryotic translation initiation factor 3 (eIF-3) complex.

The protein localises to the cytoplasm. MRNA-binding protein involved in proper cytoplasmic distribution of mitochondria. In Kluyveromyces lactis (strain ATCC 8585 / CBS 2359 / DSM 70799 / NBRC 1267 / NRRL Y-1140 / WM37) (Yeast), this protein is Clustered mitochondria protein homolog.